The following is a 199-amino-acid chain: 5'-deoxynucleotidase YfbR (199 aa).

Substrate contacts are provided by residues 18–19 (RW) and His-33. In terms of domain architecture, HD spans 30–142 (VSEHSLQVAM…VKQADALCAY (113 aa)). Residues His-33, His-68, and Asp-69 each coordinate a divalent metal cation. Substrate-binding positions include Asp-69, 77–80 (DLPT), and Asp-137. Residue Asp-137 coordinates a divalent metal cation.

Belongs to the 5DNU family. As to quaternary structure, homodimer. Requires a divalent metal cation as cofactor.

It localises to the cytoplasm. The catalysed reaction is a 2'-deoxyribonucleoside 5'-phosphate + H2O = a 2'-deoxyribonucleoside + phosphate. In terms of biological role, catalyzes the strictly specific dephosphorylation of 2'-deoxyribonucleoside 5'-monophosphates. In Shigella dysenteriae serotype 1 (strain Sd197), this protein is 5'-deoxynucleotidase YfbR.